The chain runs to 307 residues: Oxygen-dependent coproporphyrinogen-III oxidase (307 aa).

A substrate-binding site is contributed by S97. A divalent metal cation contacts are provided by H101 and H111. Catalysis depends on H111, which acts as the Proton donor. Residue 113–115 (NVR) coordinates substrate. Residues H152 and H182 each coordinate a divalent metal cation. The important for dimerization stretch occupies residues 247-282 (YVEFNLVWDRGTHFGLQSGGRTESILMSMPPLASWS). 265-267 (GGR) contacts substrate.

It belongs to the aerobic coproporphyrinogen-III oxidase family. Homodimer. It depends on a divalent metal cation as a cofactor.

The protein localises to the cytoplasm. It carries out the reaction coproporphyrinogen III + O2 + 2 H(+) = protoporphyrinogen IX + 2 CO2 + 2 H2O. Its pathway is porphyrin-containing compound metabolism; protoporphyrin-IX biosynthesis; protoporphyrinogen-IX from coproporphyrinogen-III (O2 route): step 1/1. Involved in the heme biosynthesis. Catalyzes the aerobic oxidative decarboxylation of propionate groups of rings A and B of coproporphyrinogen-III to yield the vinyl groups in protoporphyrinogen-IX. This is Oxygen-dependent coproporphyrinogen-III oxidase from Polaromonas naphthalenivorans (strain CJ2).